A 302-amino-acid polypeptide reads, in one-letter code: UDP-N-acetylenolpyruvoylglucosamine reductase (302 aa).

Residues 31-213 (KIGGPADFLI…KKIREFREKR (183 aa)) form the FAD-binding PCMH-type domain. The active site involves arginine 176. Serine 226 serves as the catalytic Proton donor. Glutamate 296 is an active-site residue.

The protein belongs to the MurB family. FAD is required as a cofactor.

The protein resides in the cytoplasm. The catalysed reaction is UDP-N-acetyl-alpha-D-muramate + NADP(+) = UDP-N-acetyl-3-O-(1-carboxyvinyl)-alpha-D-glucosamine + NADPH + H(+). It functions in the pathway cell wall biogenesis; peptidoglycan biosynthesis. In terms of biological role, cell wall formation. This Carboxydothermus hydrogenoformans (strain ATCC BAA-161 / DSM 6008 / Z-2901) protein is UDP-N-acetylenolpyruvoylglucosamine reductase.